The chain runs to 79 residues: UPF0180 protein BcerKBAB4_1316 (79 aa).

This sequence belongs to the UPF0180 family.

The chain is UPF0180 protein BcerKBAB4_1316 from Bacillus mycoides (strain KBAB4) (Bacillus weihenstephanensis).